A 57-amino-acid chain; its full sequence is UPF0391 membrane protein RPD_2934 (57 aa).

2 helical membrane passes run 6–26 (WALI…TGVS) and 35–55 (ILFY…FTIF).

The protein belongs to the UPF0391 family.

It is found in the cell membrane. In Rhodopseudomonas palustris (strain BisB5), this protein is UPF0391 membrane protein RPD_2934.